A 271-amino-acid chain; its full sequence is 4-hydroxy-tetrahydrodipicolinate reductase (271 aa).

NAD(+) contacts are provided by residues 10-15, glutamate 36, 100-102, and 124-127; these read GAGGRM, GTT, and SGNM. The active-site Proton donor/acceptor is the histidine 157. (S)-2,3,4,5-tetrahydrodipicolinate is bound at residue histidine 158. The Proton donor role is filled by lysine 161. Residue 167–168 coordinates (S)-2,3,4,5-tetrahydrodipicolinate; the sequence is GT.

It belongs to the DapB family.

The protein resides in the cytoplasm. The catalysed reaction is (S)-2,3,4,5-tetrahydrodipicolinate + NAD(+) + H2O = (2S,4S)-4-hydroxy-2,3,4,5-tetrahydrodipicolinate + NADH + H(+). It carries out the reaction (S)-2,3,4,5-tetrahydrodipicolinate + NADP(+) + H2O = (2S,4S)-4-hydroxy-2,3,4,5-tetrahydrodipicolinate + NADPH + H(+). It participates in amino-acid biosynthesis; L-lysine biosynthesis via DAP pathway; (S)-tetrahydrodipicolinate from L-aspartate: step 4/4. In terms of biological role, catalyzes the conversion of 4-hydroxy-tetrahydrodipicolinate (HTPA) to tetrahydrodipicolinate. The chain is 4-hydroxy-tetrahydrodipicolinate reductase from Rhodopseudomonas palustris (strain BisB18).